We begin with the raw amino-acid sequence, 545 residues long: Glucans biosynthesis protein G (545 aa).

A signal peptide spans 1-34; sequence MVSLLRCQSFKPSSSLICSLALSAAFALSSSAFA. The disordered stretch occupies residues 38–60; sequence KPAENKPATPVVSPPKATAQPAN.

The protein belongs to the OpgD/OpgG family.

The protein resides in the periplasm. It participates in glycan metabolism; osmoregulated periplasmic glucan (OPG) biosynthesis. Involved in the biosynthesis of osmoregulated periplasmic glucans (OPGs). The chain is Glucans biosynthesis protein G from Shewanella sp. (strain MR-4).